A 359-amino-acid chain; its full sequence is Probable D-xylulose reductase A (359 aa).

Zn(2+) is bound by residues cysteine 47, histidine 72, and glutamate 73. An NAD(+)-binding site is contributed by 182–187 (GAGPVG).

It belongs to the zinc-containing alcohol dehydrogenase family. Zn(2+) is required as a cofactor.

It catalyses the reaction xylitol + NAD(+) = D-xylulose + NADH + H(+). It functions in the pathway carbohydrate degradation; L-arabinose degradation via L-arabinitol; D-xylulose 5-phosphate from L-arabinose (fungal route): step 4/5. Xylitol dehydrogenase which catalyzes the conversion of xylitol to D-xylulose. Xylose is a major component of hemicelluloses such as xylan. Most fungi utilize D-xylose via three enzymatic reactions, xylose reductase (XR), xylitol dehydrogenase (XDH), and xylulokinase, to form xylulose 5-phosphate, which enters pentose phosphate pathway. This is Probable D-xylulose reductase A (xdhA) from Emericella nidulans (strain FGSC A4 / ATCC 38163 / CBS 112.46 / NRRL 194 / M139) (Aspergillus nidulans).